A 232-amino-acid chain; its full sequence is MTNYREIAWQGLWKNNPGLVQLLGLCPLLAVTATITNALGLGLATMLVLIGSNILVSLVRDYVPKEIRIPVFVMIIAALVTTVQLLINAYAYGLYLSLGIFLPLIVTNCIIIGRAEAFASRNNAFSAAFDGLMMGLGFTLVLTVLGATREILGQGTLFDGADQLLGPWAKSLTIHLWQVDTPFLLAMLPPGAFIVMGLLIALKNVIDKKVKERQPQVAAEPSVTRARITKVG.

Transmembrane regions (helical) follow at residues 18–38, 39–59, 69–89, 93–113, 127–147, and 182–202; these read GLVQ…ITNA, LGLG…VSLV, IPVF…LINA, GLYL…IIIG, AAFD…VLGA, and PFLL…LIAL.

This sequence belongs to the NqrDE/RnfAE family. As to quaternary structure, the complex is composed of six subunits: RnfA, RnfB, RnfC, RnfD, RnfE and RnfG.

Its subcellular location is the cell inner membrane. Its function is as follows. Part of a membrane-bound complex that couples electron transfer with translocation of ions across the membrane. The sequence is that of Ion-translocating oxidoreductase complex subunit E from Shewanella baltica (strain OS185).